A 478-amino-acid chain; its full sequence is Glycogen synthase (478 aa).

Lys-15 is an ADP-alpha-D-glucose binding site.

It belongs to the glycosyltransferase 1 family. Bacterial/plant glycogen synthase subfamily.

It catalyses the reaction [(1-&gt;4)-alpha-D-glucosyl](n) + ADP-alpha-D-glucose = [(1-&gt;4)-alpha-D-glucosyl](n+1) + ADP + H(+). It functions in the pathway glycan biosynthesis; glycogen biosynthesis. Synthesizes alpha-1,4-glucan chains using ADP-glucose. The polypeptide is Glycogen synthase (Bacillus cytotoxicus (strain DSM 22905 / CIP 110041 / 391-98 / NVH 391-98)).